A 442-amino-acid polypeptide reads, in one-letter code: Trigger factor (442 aa).

A PPIase FKBP-type domain is found at 176–259 (GDFISLSLYV…VNAVIEISSP (84 aa)).

It belongs to the FKBP-type PPIase family. Tig subfamily.

The protein resides in the cytoplasm. It carries out the reaction [protein]-peptidylproline (omega=180) = [protein]-peptidylproline (omega=0). Functionally, involved in protein export. Acts as a chaperone by maintaining the newly synthesized protein in an open conformation. Functions as a peptidyl-prolyl cis-trans isomerase. The sequence is that of Trigger factor (tig) from Chlamydia trachomatis serovar D (strain ATCC VR-885 / DSM 19411 / UW-3/Cx).